We begin with the raw amino-acid sequence, 274 residues long: uncharacterized protein (274 aa).

A signal peptide spans 1 to 17 (MKKLLAGFLTLSLALAA). Cysteine 18 is lipidated: N-palmitoyl cysteine. Cysteine 18 carries the S-diacylglycerol cysteine lipid modification. The tract at residues 18-169 (CSNGSDDDSS…DANNGASSAN (152 aa)) is disordered. Basic and acidic residues predominate over residues 25-76 (DSSKKDDSSKDNQSSDDKSKDSKNDDKKNNDSDKDKDNNSDSDKNSDSKSDD). Low complexity predominate over residues 91-169 (SDNASGSDSS…DANNGASSAN (79 aa)).

It is found in the cell membrane. This is an uncharacterized protein from Staphylococcus saprophyticus subsp. saprophyticus (strain ATCC 15305 / DSM 20229 / NCIMB 8711 / NCTC 7292 / S-41).